We begin with the raw amino-acid sequence, 240 residues long: Large ribosomal subunit protein uL1 (240 aa).

This sequence belongs to the universal ribosomal protein uL1 family. Part of the 50S ribosomal subunit.

Its function is as follows. Binds directly to 23S rRNA. The L1 stalk is quite mobile in the ribosome, and is involved in E site tRNA release. Protein L1 is also a translational repressor protein, it controls the translation of the L11 operon by binding to its mRNA. The chain is Large ribosomal subunit protein uL1 from Nocardioides sp. (strain ATCC BAA-499 / JS614).